We begin with the raw amino-acid sequence, 143 residues long: Cytochrome c-type biogenesis protein CcmE (143 aa).

The Cytoplasmic portion of the chain corresponds to 1–8; the sequence is MNPVRRRK. Residues 9–29 form a helical; Signal-anchor for type II membrane protein membrane-spanning segment; sequence LFILLFALTILSAAAALVLYA. Residues 30–143 are Periplasmic-facing; the sequence is LRQNISLFYT…KSALADKVKQ (114 aa). Heme-binding residues include H124 and Y128.

The protein belongs to the CcmE/CycJ family.

It is found in the cell inner membrane. Heme chaperone required for the biogenesis of c-type cytochromes. Transiently binds heme delivered by CcmC and transfers the heme to apo-cytochromes in a process facilitated by CcmF and CcmH. The chain is Cytochrome c-type biogenesis protein CcmE from Legionella pneumophila (strain Corby).